The sequence spans 245 residues: LOB domain-containing protein 16 (245 aa).

Residues 14 to 116 (SPCGACKFLR…SQVMQMKAQI (103 aa)) enclose the LOB domain. Residues 162–183 (YYGHVNPNNPVSPQSSLEESFS) form a disordered region.

Belongs to the LOB domain-containing protein family. Homodimer and heterodimer with LBD18. Expressed in roots and faintly in shoots.

It localises to the nucleus. In terms of biological role, transcriptional activator. Involved in lateral root formation. Regulated by the transcriptional activators ARF7 and ARF19. Functions in the initiation and emergence of lateral roots, in conjunction with LBD18, downstream of ARF7 and ARF19. Acts downstream of the auxin influx carriers AUX1 and LAX1 in the regulation of lateral root initiation and development. This Arabidopsis thaliana (Mouse-ear cress) protein is LOB domain-containing protein 16 (LBD16).